Here is a 231-residue protein sequence, read N- to C-terminus: Sugar fermentation stimulation protein homolog (231 aa).

It belongs to the SfsA family.

This Geobacter sp. (strain M21) protein is Sugar fermentation stimulation protein homolog.